We begin with the raw amino-acid sequence, 190 residues long: Protein PLANT CADMIUM RESISTANCE 10 (190 aa).

The next 2 helical transmembrane spans lie at Leu78–Val98 and Gly108–Tyr125.

This sequence belongs to the cornifelin family.

The protein resides in the membrane. May be involved in cadmium resistance. This chain is Protein PLANT CADMIUM RESISTANCE 10 (PCR10), found in Arabidopsis thaliana (Mouse-ear cress).